The following is a 507-amino-acid chain: MSHTFHCPQPLLVMIALTIFRYATLAIALIVGFVILKAIYNVFFHPLRNFPGPLRYRASRIFWVLDLIEGRQIYTIDQFHKRYGPVVRTAPDELSFTIPEAWRDIYGHRVGLVSGLPEIPKWPLFYKFTKQDVSIFNAPQGQHGTLRRALAHGFSEKSTRAQESIIGGYVDLLVTRLKEVADSKAPANMVQWYNYTTFDIVGDLVFGNSFHCLDNANYHPWVSLFADSTRQNSIFVGLKILGLDFLALATMPLVIRNMIKHFNLTKEWLRERRKLGTDRGDLIEGLLKKEGEGINFDEIHGTSMGLIFAGSETTATLLSGVTYLLLQNPKTLAKVTMEVRSSFKSDKEITLLSVQNLDYMLACLDEAFRLYPPVGIGLPRQIPKGGVKIAGIYVPEGSIVDVPQYAIHRSPDHWTEPESFHPERFLGDSRFASDKVETLQPFAVGPRNCIGRNLAYAEMRLILARVLYNFDLKMDPSCSGWLDGQKSHALWVKPPLKVQLTPTKATS.

The chain crosses the membrane as a helical span at residues 24–44 (TLAIALIVGFVILKAIYNVFF). Residue Cys-449 participates in heme binding.

The protein belongs to the cytochrome P450 family. Heme serves as cofactor.

Its subcellular location is the membrane. It functions in the pathway secondary metabolite biosynthesis. Its function is as follows. Cytochrome P450 monooxygenase; part of the gene cluster that mediates the biosynthesis of polyesters containing 2,4-dihydroxy-6-(2-hydroxypropyl)benzoate and 3-hydroxybutyrate moieties, such as talapolyester G, 15G256beta and 15G256beta-2; as well as to oxidized derivatives such as 15G256alpha. The biosynthesis of the polyesters probably starts with the formation of the diketide 3-hydroxybutyryl-S-ACP catalyzed by the partially reducing polyketide synthase tpeA. The acceptance of 3-hydroxybutyryl by the non-reducing polyketide synthase tpeB would initiate further elongation and cyclization, catalyzed by KS and PT, respectively, to form 2,4-dihydroxy-6-(2-hydroxyn-propyl)benzoyl-S-ACP intermediate. The TE domain could catalyze lactonization at this step to yield 6-hydroxymellein as a derailment product. The polyesterification process maybe occurs when additional molecules of 3-hydroxybutyryl are transferred to tpeB. Following the first esterification step, an intramolecular cyclization catalyzed by the TE domain of tpeB would give talarodioxadione 1, whereas the ethyl esterification of talapolyester G perhaps happens spontaneously. Further oxidation by the cytochrome P450 monooxygenase tpeC then leads to the formation of oxidized derivatives. This chain is Cytochrome P450 monooxygenase tpeC, found in Talaromyces stipitatus (strain ATCC 10500 / CBS 375.48 / QM 6759 / NRRL 1006) (Penicillium stipitatum).